The sequence spans 51 residues: Protein I177L (51 aa).

Asn11 carries N-linked (GlcNAc...) asparagine; by host glycosylation.

It belongs to the asfivirus I177L family.

It localises to the virion. The polypeptide is Protein I177L (Ornithodoros (relapsing fever ticks)).